A 348-amino-acid polypeptide reads, in one-letter code: VIP36-like protein (348 aa).

Positions 1 to 38 (MAATLGPLGSWQQWRRCLLARDGSRMLLLLLLLGSGQG) are cleaved as a signal peptide. Residues 39–313 (PQQVGAGQTF…APLPPLSGLA (275 aa)) are Lumenal-facing. The 226-residue stretch at 49–274 (EYLKREHSLS…DVISLKLFEL (226 aa)) folds into the L-type lectin-like domain. Serine 93 and aspartate 128 together coordinate a carbohydrate. The Ca(2+) site is built by aspartate 159, tyrosine 161, and asparagine 163. 161–163 (YPN) is an a carbohydrate binding site. A glycan (N-linked (GlcNAc...) asparagine) is linked at asparagine 181. Residue histidine 188 participates in a carbohydrate binding. Aspartate 191 is a binding site for Ca(2+). Residues cysteine 200 and cysteine 237 are joined by a disulfide bond. 258–260 (GDL) contacts a carbohydrate. A helical membrane pass occupies residues 314–334 (LFHIVFFSLVIFVFAIVIGII). The Cytoplasmic portion of the chain corresponds to 335–348 (LYNKWQEQSRKRFY). Residues 344 to 346 (RKR) carry the Endoplasmic reticulum retention signal motif.

The protein localises to the endoplasmic reticulum membrane. Its subcellular location is the golgi apparatus membrane. In terms of biological role, may be involved in the regulation of export from the endoplasmic reticulum of a subset of glycoproteins. May function as a regulator of ERGIC-53. The sequence is that of VIP36-like protein (LMAN2L) from Pongo abelii (Sumatran orangutan).